The following is a 325-amino-acid chain: Cytochrome f (325 aa).

The signal sequence occupies residues 1–40; that stretch reads MSKINLSTMWSSFIKKIAKTILVAIACISLFLTSSPAANA. Heme contacts are provided by Tyr41, Cys62, Cys65, and His66. The helical transmembrane segment at 291–311 threads the bilayer; the sequence is VKWLMAFFALVMLAQIMLVLK.

Belongs to the cytochrome f family. The 4 large subunits of the cytochrome b6-f complex are cytochrome b6, subunit IV (17 kDa polypeptide, PetD), cytochrome f and the Rieske protein, while the 4 small subunits are PetG, PetL, PetM and PetN. The complex functions as a dimer. It depends on heme as a cofactor.

It is found in the cellular thylakoid membrane. Component of the cytochrome b6-f complex, which mediates electron transfer between photosystem II (PSII) and photosystem I (PSI), cyclic electron flow around PSI, and state transitions. The sequence is that of Cytochrome f from Trichodesmium erythraeum (strain IMS101).